The sequence spans 128 residues: Entry-fusion complex protein OPG094 (128 aa).

Topologically, residues 1 to 30 are intravirion; that stretch reads MENVPNVYFNPVFIEPTFKHSLLSVYKHRL. The chain crosses the membrane as a helical; Signal-anchor for type III membrane protein span at residues 31-51; sequence IVLFEVFVVFILIYVFFRSEL. Over 52–107 the chain is Virion surface; it reads NMFFMHKRKIPDPIDRLRRANLACEDDKLMIYGLPWITTQTSALSINSKPIVYKDC. Cys75 and Cys107 are joined by a disulfide.

The protein belongs to the orthopoxvirus OPG099 family. As to quaternary structure, interacts with OPG086. Component of the entry fusion complex (EFC) composed of OPG053, OPG076, OPG086, OPG094, OPG095, OPG099, OPG107, OPG143, OPG104J5, OPG147 and OPG155. Except for OPG095 and OPG053, each of the EFC proteins is required for assembly or stability of the complex. Most cysteines are linked by disulfide bonds. They are created by the viral disulfide bond formation pathway, a poxvirus-specific redox pathway that operates on the cytoplasmic side of the MV membranes. In terms of processing, unglycosylated because produced in viral factories instead of the classic ER -Golgi route.

The protein resides in the virion membrane. Functionally, component of the entry fusion complex (EFC), which consists of 11 proteins. During cell infection, this complex mediates entry of the virion core into the host cytoplasm by a two-step mechanism consisting of lipid mixing of the viral and cellular membranes and subsequent pore formation. The protein is Entry-fusion complex protein OPG094 (OPG099) of Homo sapiens (Human).